Consider the following 506-residue polypeptide: Probable Xaa-Pro aminopeptidase PAAG_05466 (506 aa).

4 residues coordinate Mn(2+): aspartate 285, aspartate 296, glutamate 433, and glutamate 471.

The protein belongs to the peptidase M24B family. Mn(2+) is required as a cofactor.

The enzyme catalyses Release of any N-terminal amino acid, including proline, that is linked to proline, even from a dipeptide or tripeptide.. Functionally, catalyzes the removal of a penultimate prolyl residue from the N-termini of peptides. In Paracoccidioides lutzii (strain ATCC MYA-826 / Pb01) (Paracoccidioides brasiliensis), this protein is Probable Xaa-Pro aminopeptidase PAAG_05466.